The chain runs to 798 residues: Transferrin receptor protein 2 (798 aa).

Residues 1 to 81 (MEQRWGLLRR…WAAAGRKAAP (81 aa)) lie on the Cytoplasmic side of the membrane. Residues 23 to 26 (YRRV) carry the Endocytosis signal motif. A helical; Signal-anchor for type II membrane protein membrane pass occupies residues 82–102 (YLVLITLLIFTGAFLLGYVAF). Residues 103–798 (RGSCQACGDS…GDVWNIDNNF (696 aa)) are Extracellular-facing. 3 N-linked (GlcNAc...) asparagine glycosylation sites follow: Asn-235, Asn-334, and Asn-535.

The protein belongs to the peptidase M28 family. M28B subfamily. In terms of tissue distribution, predominantly expressed in liver. Also expressed in kidney, spleen, brain, lung, heart and muscle with very low expression in kidney, muscle and heart.

It is found in the cell membrane. The protein resides in the cytoplasm. Its function is as follows. Mediates cellular uptake of transferrin-bound iron in a non-iron dependent manner. May be involved in iron metabolism, hepatocyte function and erythrocyte differentiation. The protein is Transferrin receptor protein 2 (Tfr2) of Mus musculus (Mouse).